The following is a 199-amino-acid chain: 3-isopropylmalate dehydratase small subunit (199 aa).

It belongs to the LeuD family. LeuD type 1 subfamily. Heterodimer of LeuC and LeuD.

The catalysed reaction is (2R,3S)-3-isopropylmalate = (2S)-2-isopropylmalate. The protein operates within amino-acid biosynthesis; L-leucine biosynthesis; L-leucine from 3-methyl-2-oxobutanoate: step 2/4. Its function is as follows. Catalyzes the isomerization between 2-isopropylmalate and 3-isopropylmalate, via the formation of 2-isopropylmaleate. This Aeromonas hydrophila subsp. hydrophila (strain ATCC 7966 / DSM 30187 / BCRC 13018 / CCUG 14551 / JCM 1027 / KCTC 2358 / NCIMB 9240 / NCTC 8049) protein is 3-isopropylmalate dehydratase small subunit.